An 880-amino-acid chain; its full sequence is Valine--tRNA ligase (880 aa).

Positions 49-59 (PNVTGKLHLGH) match the 'HIGH' region motif. The 'KMSKS' region signature appears at 525 to 529 (KMSKS). Residue lysine 528 coordinates ATP. Positions 809–880 (LEGLINIDEE…VEKRIAELKN (72 aa)) form a coiled coil.

This sequence belongs to the class-I aminoacyl-tRNA synthetase family. ValS type 1 subfamily. As to quaternary structure, monomer.

It localises to the cytoplasm. The catalysed reaction is tRNA(Val) + L-valine + ATP = L-valyl-tRNA(Val) + AMP + diphosphate. Its function is as follows. Catalyzes the attachment of valine to tRNA(Val). As ValRS can inadvertently accommodate and process structurally similar amino acids such as threonine, to avoid such errors, it has a 'posttransfer' editing activity that hydrolyzes mischarged Thr-tRNA(Val) in a tRNA-dependent manner. This is Valine--tRNA ligase from Bacillus licheniformis (strain ATCC 14580 / DSM 13 / JCM 2505 / CCUG 7422 / NBRC 12200 / NCIMB 9375 / NCTC 10341 / NRRL NRS-1264 / Gibson 46).